A 217-amino-acid polypeptide reads, in one-letter code: Large ribosomal subunit protein uL29m (217 aa).

It belongs to the universal ribosomal protein uL29 family. Component of the mitochondrial large ribosomal subunit. Mature mitochondrial ribosomes consist of a small (37S) and a large (54S) subunit. The 37S subunit contains at least 33 different proteins and 1 molecule of RNA (15S). The 54S subunit contains at least 45 different proteins and 1 molecule of RNA (21S).

It is found in the mitochondrion. In Aspergillus clavatus (strain ATCC 1007 / CBS 513.65 / DSM 816 / NCTC 3887 / NRRL 1 / QM 1276 / 107), this protein is Large ribosomal subunit protein uL29m (mrpl4).